The following is an 86-amino-acid chain: Small ribosomal subunit protein bS18 (86 aa).

This sequence belongs to the bacterial ribosomal protein bS18 family. In terms of assembly, part of the 30S ribosomal subunit. Forms a tight heterodimer with protein bS6.

In terms of biological role, binds as a heterodimer with protein bS6 to the central domain of the 16S rRNA, where it helps stabilize the platform of the 30S subunit. This Campylobacter lari (strain RM2100 / D67 / ATCC BAA-1060) protein is Small ribosomal subunit protein bS18.